The primary structure comprises 95 residues: Small ribosomal subunit protein uS14 (95 aa).

It belongs to the universal ribosomal protein uS14 family. In terms of assembly, part of the 30S ribosomal subunit. Contacts proteins S3 and S10.

Binds 16S rRNA, required for the assembly of 30S particles and may also be responsible for determining the conformation of the 16S rRNA at the A site. In Fusobacterium nucleatum subsp. nucleatum (strain ATCC 25586 / DSM 15643 / BCRC 10681 / CIP 101130 / JCM 8532 / KCTC 2640 / LMG 13131 / VPI 4355), this protein is Small ribosomal subunit protein uS14.